The primary structure comprises 452 residues: Mitochondrial import inner membrane translocase subunit TIM44 (452 aa).

Phosphothreonine is present on T128. 166–173 (GGEKLGRT) is a binding site for ATP. Position 180 is a phosphoserine (S180). The residue at position 217 (K217) is an N6-succinyllysine.

This sequence belongs to the Tim44 family. As to quaternary structure, probable component of the PAM complex at least composed of a mitochondrial HSP70 protein, GRPEL1 or GRPEL2, TIMM44, TIMM16/PAM16 and TIMM14/DNAJC19. The complex interacts with the TIMM23 component of the TIM23 complex. Interacts with SLC25A4/ANT1 and SLC25A5/ANT2; leading to inhibit the presequence translocase TIMM23, thereby promoting stabilization of PINK1.

The protein resides in the mitochondrion inner membrane. It localises to the mitochondrion matrix. In terms of biological role, essential component of the PAM complex, a complex required for the translocation of transit peptide-containing proteins from the inner membrane into the mitochondrial matrix in an ATP-dependent manner. Recruits mitochondrial HSP70 to drive protein translocation into the matrix using ATP as an energy source. This is Mitochondrial import inner membrane translocase subunit TIM44 (TIMM44) from Homo sapiens (Human).